Consider the following 195-residue polypeptide: Interferon tau (195 aa).

Residues 1–23 form the signal peptide; the sequence is MAFMLSLLMALVLVSYGLGGSLG. 2 cysteine pairs are disulfide-bonded: Cys52–Cys162 and Cys87–Cys109.

This sequence belongs to the alpha/beta interferon family. IFN-alphaII subfamily.

It is found in the secreted. Functionally, paracrine hormone primarily responsible for maternal recognition of pregnancy. Interacts with endometrial receptors, probably type I interferon receptors, and blocks estrogen receptor expression, preventing the estrogen-induced increase in oxytocin receptor expression in the endometrium. This results in the suppression of the pulsatile endometrial release of the luteolytic hormone prostaglandin F2-alpha, hindering the regression of the corpus luteum (luteolysis) and therefore a return to ovarian cyclicity. This, and a possible direct effect of IFN-tau on prostaglandin synthesis, leads in turn to continued ovarian progesterone secretion, which stimulates the secretion by the endometrium of the nutrients required for the growth of the conceptus. In summary, displays particularly high antiviral and antiproliferative potency concurrently with particular weak cytotoxicity, high antiluteolytic activity and immunomodulatory properties. In contrast with other IFNs, IFN-tau is not virally inducible. In Giraffa camelopardalis (Giraffe), this protein is Interferon tau (IFNT).